The sequence spans 139 residues: Large ribosomal subunit protein uL16 (139 aa).

A compositionally biased stretch (basic residues) spans 1 to 20 (MLIPKRTKYRKQHRPVRRGM). Positions 1 to 21 (MLIPKRTKYRKQHRPVRRGMS) are disordered.

Belongs to the universal ribosomal protein uL16 family. As to quaternary structure, part of the 50S ribosomal subunit.

In terms of biological role, binds 23S rRNA and is also seen to make contacts with the A and possibly P site tRNAs. This chain is Large ribosomal subunit protein uL16, found in Bifidobacterium adolescentis (strain ATCC 15703 / DSM 20083 / NCTC 11814 / E194a).